The sequence spans 226 residues: Ribonuclease 3 (226 aa).

Residues isoleucine 6–asparagine 128 form the RNase III domain. A Mg(2+)-binding site is contributed by glutamate 41. The active site involves aspartate 45. Mg(2+)-binding residues include aspartate 114 and glutamate 117. Glutamate 117 is an active-site residue. Residues aspartate 155–leucine 225 enclose the DRBM domain.

Belongs to the ribonuclease III family. Homodimer. Mg(2+) is required as a cofactor.

It is found in the cytoplasm. The catalysed reaction is Endonucleolytic cleavage to 5'-phosphomonoester.. Digests double-stranded RNA. Involved in the processing of primary rRNA transcript to yield the immediate precursors to the large and small rRNAs (23S and 16S). Processes some mRNAs, and tRNAs when they are encoded in the rRNA operon. Processes pre-crRNA and tracrRNA of type II CRISPR loci if present in the organism. In Salmonella typhi, this protein is Ribonuclease 3.